The primary structure comprises 152 residues: SsrA-binding protein (152 aa).

Belongs to the SmpB family.

It localises to the cytoplasm. Required for rescue of stalled ribosomes mediated by trans-translation. Binds to transfer-messenger RNA (tmRNA), required for stable association of tmRNA with ribosomes. tmRNA and SmpB together mimic tRNA shape, replacing the anticodon stem-loop with SmpB. tmRNA is encoded by the ssrA gene; the 2 termini fold to resemble tRNA(Ala) and it encodes a 'tag peptide', a short internal open reading frame. During trans-translation Ala-aminoacylated tmRNA acts like a tRNA, entering the A-site of stalled ribosomes, displacing the stalled mRNA. The ribosome then switches to translate the ORF on the tmRNA; the nascent peptide is terminated with the 'tag peptide' encoded by the tmRNA and targeted for degradation. The ribosome is freed to recommence translation, which seems to be the essential function of trans-translation. This chain is SsrA-binding protein, found in Rickettsia montanensis.